The primary structure comprises 278 residues: HTH-type transcriptional activator RhaS (278 aa).

The region spanning 174–272 (NQLMAWLEDH…NWSPRDIRQG (99 aa)) is the HTH araC/xylS-type domain. 2 consecutive DNA-binding regions (H-T-H motif) follow at residues 191 to 212 (EAVAEQFSLSLRTLHRQLKQHT) and 239 to 262 (VTEIAYRCGFGDSNHFSTLFRREF).

Binds DNA as a dimer.

The protein resides in the cytoplasm. Its function is as follows. Activates expression of the rhaBAD and rhaT operons. The protein is HTH-type transcriptional activator RhaS of Salmonella heidelberg (strain SL476).